A 462-amino-acid polypeptide reads, in one-letter code: Transcript termination protein A18 (462 aa).

Residues 99–255 enclose the Helicase ATP-binding domain; the sequence is KCKEKRPLYT…NSIINFIKFS (157 aa). 112–119 provides a ligand contact to ATP; that stretch reads LACGFGKT. Residues 205–208 carry the DEAH box motif; that stretch reads DEAH. The Helicase C-terminal domain occupies 308-459; it reads IVDKIIETFK…ATKLGFREVS (152 aa).

This sequence belongs to the helicase family. Poxviruses subfamily. As to quaternary structure, interacts with G2. Might be part of a transcription complex composed at least of G2, A18, and H5.

The protein localises to the virion. DNA helicase which seems to act as a postreplicative transcription termination factor. Involved in ATP-dependent release of nascent RNA. Forms a stable complex with single-stranded DNA, and to a lesser extent RNA. The sequence is that of Transcript termination protein A18 from Vertebrata (FPV).